The sequence spans 102 residues: Small ribosomal subunit protein uS10 (102 aa).

It belongs to the universal ribosomal protein uS10 family. Part of the 30S ribosomal subunit.

Its function is as follows. Involved in the binding of tRNA to the ribosomes. The polypeptide is Small ribosomal subunit protein uS10 (Sulfurisphaera tokodaii (strain DSM 16993 / JCM 10545 / NBRC 100140 / 7) (Sulfolobus tokodaii)).